A 410-amino-acid polypeptide reads, in one-letter code: Regulator of microtubule dynamics protein 2 (410 aa).

A helical membrane pass occupies residues 10 to 27 (ILGIVVGTAGISLLLLWY). The stretch at 71 to 109 (RQLQILEKLNELLTHMEELKEEIRVLKEAIPKLEEYIQG) forms a coiled coil. The residue at position 121 (S121) is a Phosphoserine. Residues 122-131 (PQHRARKRRL) show a composition bias toward basic residues. The segment at 122–153 (PQHRARKRRLATVQSSATSNSSEEAESEGGYV) is disordered. A Phosphothreonine modification is found at T139. Position 152 is a phosphotyrosine (Y152). A phosphothreonine mark is found at T154 and T157.

This sequence belongs to the RMDN family. In terms of assembly, interacts with microtubules.

Its subcellular location is the membrane. It is found in the cytoplasm. The protein localises to the cytoskeleton. The protein resides in the spindle. It localises to the spindle pole. This is Regulator of microtubule dynamics protein 2 (RMDN2) from Bos taurus (Bovine).